The following is a 442-amino-acid chain: 4-alpha-glucanotransferase (442 aa).

Ca(2+) is bound by residues Asp-13, Asn-15, Asp-17, Val-19, and Asp-21. Asp-186 (nucleophile) is an active-site residue. The Proton donor role is filled by Glu-216.

Belongs to the glycosyl hydrolase 13 family. Monomer. The cofactor is Ca(2+).

Its subcellular location is the cytoplasm. The catalysed reaction is Transfers a segment of a (1-&gt;4)-alpha-D-glucan to a new position in an acceptor, which may be glucose or a (1-&gt;4)-alpha-D-glucan.. In terms of biological role, hydrolyzes the 1,4-alpha-glycoside bonds in oligomeric and polymeric 1,4-alpha-glucans and transfers oligosaccharides (maltotriose being the shortest one) to acceptor maltodextrins. The sequence is that of 4-alpha-glucanotransferase (mgtA) from Thermotoga neapolitana.